The following is a 250-amino-acid chain: Acetoacetate decarboxylase 1 (250 aa).

K120 acts as the Schiff-base intermediate with acetoacetate in catalysis.

It belongs to the ADC family.

It catalyses the reaction acetoacetate + H(+) = acetone + CO2. In terms of biological role, catalyzes the conversion of acetoacetate to acetone and carbon dioxide. The sequence is that of Acetoacetate decarboxylase 1 from Bradyrhizobium diazoefficiens (strain JCM 10833 / BCRC 13528 / IAM 13628 / NBRC 14792 / USDA 110).